A 115-amino-acid polypeptide reads, in one-letter code: uncharacterized protein (115 aa).

An N-terminal signal peptide occupies residues 1-26 (MNFKKTVVSALSISALALSVSGVASA). The BIG2 domain maps to 36–114 (VKNISISPTH…AVFGKVYVTV (79 aa)).

This is an uncharacterized protein from Bacillus subtilis (strain 168).